Here is a 424-residue protein sequence, read N- to C-terminus: Probable ribonuclease FAU-1 (424 aa).

The protein belongs to the FAU-1 family.

Probable RNase involved in rRNA stability through maturation and/or degradation of precursor rRNAs. Binds to RNA in loop regions with AU-rich sequences. The sequence is that of Probable ribonuclease FAU-1 from Saccharolobus islandicus (strain M.16.27) (Sulfolobus islandicus).